The primary structure comprises 320 residues: o-succinylbenzoate synthase (320 aa).

Lys-133 serves as the catalytic Proton donor. Residues Asp-161, Glu-190, and Asp-213 each contribute to the Mg(2+) site. Lys-235 acts as the Proton acceptor in catalysis.

This sequence belongs to the mandelate racemase/muconate lactonizing enzyme family. MenC type 1 subfamily. It depends on a divalent metal cation as a cofactor.

It carries out the reaction (1R,6R)-6-hydroxy-2-succinyl-cyclohexa-2,4-diene-1-carboxylate = 2-succinylbenzoate + H2O. Its pathway is quinol/quinone metabolism; 1,4-dihydroxy-2-naphthoate biosynthesis; 1,4-dihydroxy-2-naphthoate from chorismate: step 4/7. The protein operates within quinol/quinone metabolism; menaquinone biosynthesis. In terms of biological role, converts 2-succinyl-6-hydroxy-2,4-cyclohexadiene-1-carboxylate (SHCHC) to 2-succinylbenzoate (OSB). In Escherichia coli O127:H6 (strain E2348/69 / EPEC), this protein is o-succinylbenzoate synthase.